Consider the following 232-residue polypeptide: Aquaporin Z (232 aa).

2 consecutive transmembrane segments (helical) span residues 8–28 (AFGT…AAGF) and 33–53 (IGLL…AFAI). The NPA 1 motif lies at 62 to 64 (NPA). 3 consecutive transmembrane segments (helical) span residues 84 to 104 (IIAQ…IATG), 130 to 150 (MLAA…VIMG), and 159 to 179 (GFAP…SIPV). Positions 185–187 (NPA) match the NPA 2 motif. Residues 201–221 (VSQLWLFWVAPIVGGVLGAVI) form a helical membrane-spanning segment.

It belongs to the MIP/aquaporin (TC 1.A.8) family. As to quaternary structure, homotetramer.

It is found in the cell inner membrane. It catalyses the reaction H2O(in) = H2O(out). Functionally, channel that permits osmotically driven movement of water in both directions. It is involved in the osmoregulation and in the maintenance of cell turgor during volume expansion in rapidly growing cells. It mediates rapid entry or exit of water in response to abrupt changes in osmolarity. The polypeptide is Aquaporin Z (Vibrio parahaemolyticus serotype O3:K6 (strain RIMD 2210633)).